Reading from the N-terminus, the 394-residue chain is MQERHLFTSESVSEGHPDKIADQISDAILDAMLEQDPDSRVACETTVTTGLVLVVGEISTKAYVDIQSVVRGTIKKIGYTKESGFDPDSVGVLVALDEQSPDIAQGVDESLEARESDTDPLDKIGAGDQGMMFGFAIDETENYMPLPISLAHALMRKTDSLRHKGEISYLRPDAKAQVTVEYDDDDNPIRVDSVVVSVQHDPDVTLEEIRRDVEAKIIRTVIPEALMDDDTKIYVNPTGRFVLGGPQADSGLTGRKIIVDTYGGFARHGGGAFSGKDATKVDRSASYAARYIAKNVVAAGLAKRVEVQLAYAIGVAKPVSVSVNTFGTSAVSEDVIEQAIRENFDLRPAGIIKMLDLKRPIYEQTAAYGHFGRTDVDLPWEHLDKVQALLKYRD.

Residue H16 participates in ATP binding. Residue D18 participates in Mg(2+) binding. E44 is a binding site for K(+). Residues E57 and Q99 each contribute to the L-methionine site. Residues 99-109 (QSPDIAQGVDE) are flexible loop. ATP contacts are provided by residues 173-175 (DAK), 240-241 (RF), D249, 255-256 (RK), A272, and K276. D249 contributes to the L-methionine binding site. K280 contacts L-methionine.

It belongs to the AdoMet synthase family. In terms of assembly, homotetramer; dimer of dimers. Mg(2+) serves as cofactor. The cofactor is K(+).

It is found in the cytoplasm. It carries out the reaction L-methionine + ATP + H2O = S-adenosyl-L-methionine + phosphate + diphosphate. Its pathway is amino-acid biosynthesis; S-adenosyl-L-methionine biosynthesis; S-adenosyl-L-methionine from L-methionine: step 1/1. Catalyzes the formation of S-adenosylmethionine (AdoMet) from methionine and ATP. The overall synthetic reaction is composed of two sequential steps, AdoMet formation and the subsequent tripolyphosphate hydrolysis which occurs prior to release of AdoMet from the enzyme. This chain is S-adenosylmethionine synthase, found in Lacticaseibacillus paracasei (strain ATCC 334 / BCRC 17002 / CCUG 31169 / CIP 107868 / KCTC 3260 / NRRL B-441) (Lactobacillus paracasei).